The chain runs to 389 residues: MLRFETAGESHGECLVATMNGLPAGIPISLETVNRELWRRQQGYGRGGRMKIETDKAEIVAGVRHSRTIGAPLAIIIRNKDWQNWTEILPVEDAGSGADRKPVTRPRPGHADLAGAIKYNFHDARYILERASARETTARVAVGAIAKALLAEFGIQVLSHVIAVGSVRLERAASWDELVALSLRDQVLLGCVDAETEARMKEVVDEAYRTGDTVGGVFEVVARGLPIGLGSHVTWDSRLDGRLAQAIVSMQAVKGVEVGFAAEGAASFGSKVQDTIHYDREAHHFTRGANRAGGIEGGMTNGQDILVRGMLKPISTLRRPLESVDLLTREPSPAAYERSDVCVVPAAGVIGEAMVAIVLAQAFLEKFGGDSLTETRRNFDSYLEQVKNY.

R40 and R46 together coordinate NADP(+). FMN contacts are provided by residues R130–S132, Q251–A252, G297, K312–T316, and R338.

Belongs to the chorismate synthase family. As to quaternary structure, homotetramer. The cofactor is FMNH2.

The catalysed reaction is 5-O-(1-carboxyvinyl)-3-phosphoshikimate = chorismate + phosphate. It participates in metabolic intermediate biosynthesis; chorismate biosynthesis; chorismate from D-erythrose 4-phosphate and phosphoenolpyruvate: step 7/7. Its function is as follows. Catalyzes the anti-1,4-elimination of the C-3 phosphate and the C-6 proR hydrogen from 5-enolpyruvylshikimate-3-phosphate (EPSP) to yield chorismate, which is the branch point compound that serves as the starting substrate for the three terminal pathways of aromatic amino acid biosynthesis. This reaction introduces a second double bond into the aromatic ring system. This chain is Chorismate synthase, found in Solibacter usitatus (strain Ellin6076).